The sequence spans 118 residues: Small ribosomal subunit protein uS13 (118 aa).

Residues Arg-93–Lys-118 are disordered.

This sequence belongs to the universal ribosomal protein uS13 family. As to quaternary structure, part of the 30S ribosomal subunit. Forms a loose heterodimer with protein S19. Forms two bridges to the 50S subunit in the 70S ribosome.

In terms of biological role, located at the top of the head of the 30S subunit, it contacts several helices of the 16S rRNA. In the 70S ribosome it contacts the 23S rRNA (bridge B1a) and protein L5 of the 50S subunit (bridge B1b), connecting the 2 subunits; these bridges are implicated in subunit movement. Contacts the tRNAs in the A and P-sites. The sequence is that of Small ribosomal subunit protein uS13 from Teredinibacter turnerae (strain ATCC 39867 / T7901).